We begin with the raw amino-acid sequence, 269 residues long: MASSVRAPSGSVIAVASSSSSAALAGVCGTGSPCAACKFLRRKCQPDCVFAPYFPPDNPQKFVRVHRVFGASNVTKLMNEIHPLQREDAMNSLAYEADMRIRDPVYGCVGVISILQHNLRQLQQDLARAKYELSKYQAAAAASASTAPTGPQAMAEFIGSAMPNGAAHNFINLGHSAALGSLGGSTAMFGQQEQFGSNAQMLSRSYDGGEPIARIGMNNGGYEFGYSSATTMGGSAGAVSGGLGTLGISSPPFLKSGTAGGDEKPSGGY.

Residues 32–133 (SPCAACKFLR…QDLARAKYEL (102 aa)) form the LOB domain.

Belongs to the LOB domain-containing protein family. Expressed in leaves, leaf primordia, immature ears, immature tassels, whole ovules, silk and husk leaves.

The protein resides in the nucleus. This is Protein IAL1 from Zea mays (Maize).